The following is an 858-amino-acid chain: Magnesium transporter ALR2 (858 aa).

Positions 1–14 (MSSLSTSFDSSSDL) are enriched in low complexity. 3 disordered regions span residues 1-81 (MSSL…NGGY), 318-337 (TYNH…TSGS), and 365-396 (NNES…EGND). At 1 to 741 (MSSLSTSFDS…NNKVTEMLGK (741 aa)) the chain is on the cytoplasmic side. The span at 46 to 61 (PIRHEALALKVDETKD) shows a compositional bias: basic and acidic residues. Positions 67–81 (SSSNGENSGVENGGY) are enriched in low complexity. Composition is skewed to basic and acidic residues over residues 367-379 (ESVR…DLHP) and 386-395 (NKIEGEKEGN). The chain crosses the membrane as a helical span at residues 742–762 (VTMLGTMLVPLNVITGLFGMN). Topologically, residues 763–771 (VKVPGRNGS) are extracellular. Residues 772–792 (IAWWYGILGVLLLLAVISWFL) traverse the membrane as a helical segment. The Cytoplasmic segment spans residues 793–858 (ASYWIKKIDP…SLPSRYSRYN (66 aa)).

Belongs to the CorA metal ion transporter (MIT) (TC 1.A.35) family.

It is found in the cell membrane. In terms of biological role, plasma membrane magnesium transporter. This is Magnesium transporter ALR2 (ALR2) from Saccharomyces cerevisiae (strain ATCC 204508 / S288c) (Baker's yeast).